The chain runs to 60 residues: UPF0434 protein SG0997 (60 aa).

Belongs to the UPF0434 family.

The chain is UPF0434 protein SG0997 from Sodalis glossinidius (strain morsitans).